A 155-amino-acid polypeptide reads, in one-letter code: Small ribosomal subunit protein uS17 (155 aa).

An N-acetylalanine modification is found at alanine 2.

Belongs to the universal ribosomal protein uS17 family.

In Drosophila pseudoobscura pseudoobscura (Fruit fly), this protein is Small ribosomal subunit protein uS17.